A 367-amino-acid chain; its full sequence is MAQVINTNYLSLVTQNNLNRSQSALGNAIERLSSGMRINSAKDDAAGQAIANRFTSNINGLTQASRNANDGISVSQTTEGALNEINNNLQRIRELTVQAKNGTNSNSDINSIQNEVNQRLDEINRVSEQTQFNGVKVLSGEKSKMTIQVGTNDNEVIEFNLDKIDNDTLGVASDKLFDAKTEKKGVTAAGDAIDANALGISGSKKYVTGISVKEYKVDGKVSSDKVVLNDGSDDYIVSKSDFTLKSGTTTGEVEFTGSKTTKFTADAGKDVKVLNVKDDALATLDNAISKVDESRSKLGAIQNRFQSTINNLNNTVNNLSASRSRILDADYATEVSNMSKNQILQQAGTAVLAQANQVPQTVLSLLR.

The protein belongs to the bacterial flagellin family.

It localises to the secreted. The protein resides in the bacterial flagellum. Flagellin is the subunit protein which polymerizes to form the filaments of bacterial flagella. This Proteus mirabilis protein is Flagellin 2 (fliC2).